The primary structure comprises 413 residues: Serine--tRNA ligase (413 aa).

Residue 221-223 (TAE) coordinates L-serine. An ATP-binding site is contributed by 252–254 (RRE). Residue glutamate 275 participates in L-serine binding. Residue 339 to 342 (EVSS) coordinates ATP. An L-serine-binding site is contributed by serine 375.

This sequence belongs to the class-II aminoacyl-tRNA synthetase family. Type-1 seryl-tRNA synthetase subfamily. As to quaternary structure, homodimer. The tRNA molecule binds across the dimer.

Its subcellular location is the cytoplasm. The catalysed reaction is tRNA(Ser) + L-serine + ATP = L-seryl-tRNA(Ser) + AMP + diphosphate + H(+). It carries out the reaction tRNA(Sec) + L-serine + ATP = L-seryl-tRNA(Sec) + AMP + diphosphate + H(+). It participates in aminoacyl-tRNA biosynthesis; selenocysteinyl-tRNA(Sec) biosynthesis; L-seryl-tRNA(Sec) from L-serine and tRNA(Sec): step 1/1. Functionally, catalyzes the attachment of serine to tRNA(Ser). Is also able to aminoacylate tRNA(Sec) with serine, to form the misacylated tRNA L-seryl-tRNA(Sec), which will be further converted into selenocysteinyl-tRNA(Sec). The polypeptide is Serine--tRNA ligase (Dehalococcoides mccartyi (strain ATCC BAA-2100 / JCM 16839 / KCTC 5957 / BAV1)).